A 320-amino-acid chain; its full sequence is Foldase protein PrsA (320 aa).

An N-terminal signal peptide occupies residues 1–20; that stretch reads MKMINKLIVPVTASALLLGA. C21 carries the N-palmitoyl cysteine lipid modification. The S-diacylglycerol cysteine moiety is linked to residue C21. The 107-residue stretch at 139–245 folds into the PpiC domain; that stretch reads EDSKKASHIL…FGYHIIKADK (107 aa). Residues 159-198 are disordered; sequence EGLDDKEAKQKAEEIQKEVSKDPSKFGEIAKKESMDTGSA.

The protein belongs to the PrsA family.

The protein resides in the cell membrane. The enzyme catalyses [protein]-peptidylproline (omega=180) = [protein]-peptidylproline (omega=0). In terms of biological role, plays a major role in protein secretion by helping the post-translocational extracellular folding of several secreted proteins. This is Foldase protein PrsA from Staphylococcus aureus (strain Mu3 / ATCC 700698).